Here is a 349-residue protein sequence, read N- to C-terminus: Ferredoxin--NADP reductase 3 (349 aa).

The FAD site is built by Glu34, Lys42, Tyr46, Val86, Ile120, Asp287, and Ser328.

Belongs to the ferredoxin--NADP reductase type 2 family. As to quaternary structure, homodimer. The cofactor is FAD.

The catalysed reaction is 2 reduced [2Fe-2S]-[ferredoxin] + NADP(+) + H(+) = 2 oxidized [2Fe-2S]-[ferredoxin] + NADPH. In Lysinibacillus sphaericus (strain C3-41), this protein is Ferredoxin--NADP reductase 3.